Reading from the N-terminus, the 294-residue chain is Acetylglutamate kinase (294 aa).

Substrate-binding positions include 47 to 48 (GG), Arg69, and Asn168.

Belongs to the acetylglutamate kinase family. ArgB subfamily.

Its subcellular location is the cytoplasm. The catalysed reaction is N-acetyl-L-glutamate + ATP = N-acetyl-L-glutamyl 5-phosphate + ADP. It participates in amino-acid biosynthesis; L-arginine biosynthesis; N(2)-acetyl-L-ornithine from L-glutamate: step 2/4. In terms of biological role, catalyzes the ATP-dependent phosphorylation of N-acetyl-L-glutamate. The sequence is that of Acetylglutamate kinase from Corynebacterium glutamicum (strain ATCC 13032 / DSM 20300 / JCM 1318 / BCRC 11384 / CCUG 27702 / LMG 3730 / NBRC 12168 / NCIMB 10025 / NRRL B-2784 / 534).